Reading from the N-terminus, the 265-residue chain is Imidazole glycerol phosphate synthase subunit HisF (265 aa).

Residues aspartate 12 and aspartate 131 contribute to the active site.

Belongs to the HisA/HisF family. As to quaternary structure, heterodimer of HisH and HisF.

The protein resides in the cytoplasm. It carries out the reaction 5-[(5-phospho-1-deoxy-D-ribulos-1-ylimino)methylamino]-1-(5-phospho-beta-D-ribosyl)imidazole-4-carboxamide + L-glutamine = D-erythro-1-(imidazol-4-yl)glycerol 3-phosphate + 5-amino-1-(5-phospho-beta-D-ribosyl)imidazole-4-carboxamide + L-glutamate + H(+). Its pathway is amino-acid biosynthesis; L-histidine biosynthesis; L-histidine from 5-phospho-alpha-D-ribose 1-diphosphate: step 5/9. IGPS catalyzes the conversion of PRFAR and glutamine to IGP, AICAR and glutamate. The HisF subunit catalyzes the cyclization activity that produces IGP and AICAR from PRFAR using the ammonia provided by the HisH subunit. The chain is Imidazole glycerol phosphate synthase subunit HisF from Alkalilimnicola ehrlichii (strain ATCC BAA-1101 / DSM 17681 / MLHE-1).